The sequence spans 86 residues: Small ribosomal subunit protein bS20 (86 aa).

It belongs to the bacterial ribosomal protein bS20 family.

In terms of biological role, binds directly to 16S ribosomal RNA. The polypeptide is Small ribosomal subunit protein bS20 (Kocuria rhizophila (strain ATCC 9341 / DSM 348 / NBRC 103217 / DC2201)).